Consider the following 122-residue polypeptide: Large ribosomal subunit protein uL14 (122 aa).

Belongs to the universal ribosomal protein uL14 family. In terms of assembly, part of the 50S ribosomal subunit. Forms a cluster with proteins L3 and L19. In the 70S ribosome, L14 and L19 interact and together make contacts with the 16S rRNA in bridges B5 and B8. Interacts with ribosomal silencing factor RsfS, which may inhibit ribosomal subunit association.

Its function is as follows. Binds to 23S rRNA. Forms part of two intersubunit bridges in the 70S ribosome. The polypeptide is Large ribosomal subunit protein uL14 (Treponema pallidum (strain Nichols)).